The chain runs to 360 residues: Dihydroorotate dehydrogenase (quinone) (360 aa).

FMN is bound by residues 66–70 (AGFDK) and Thr90. Lys70 lines the substrate pocket. Position 115 to 119 (115 to 119 (NRMGF)) interacts with substrate. Residues Asn143 and Asn176 each contribute to the FMN site. Asn176 contacts substrate. Ser179 functions as the Nucleophile in the catalytic mechanism. Residue Asn181 coordinates substrate. FMN contacts are provided by Lys212 and Thr240. 241–242 (NT) lines the substrate pocket. FMN-binding positions include Gly264, Gly293, and 314 to 315 (YT).

It belongs to the dihydroorotate dehydrogenase family. Type 2 subfamily. In terms of assembly, monomer. Requires FMN as cofactor.

The protein resides in the cell membrane. The catalysed reaction is (S)-dihydroorotate + a quinone = orotate + a quinol. The protein operates within pyrimidine metabolism; UMP biosynthesis via de novo pathway; orotate from (S)-dihydroorotate (quinone route): step 1/1. In terms of biological role, catalyzes the conversion of dihydroorotate to orotate with quinone as electron acceptor. The polypeptide is Dihydroorotate dehydrogenase (quinone) (Mycobacterium ulcerans (strain Agy99)).